Reading from the N-terminus, the 78-residue chain is Protein SlyX homolog (78 aa).

This sequence belongs to the SlyX family.

The chain is Protein SlyX homolog from Xylella fastidiosa (strain 9a5c).